The sequence spans 180 residues: Large ribosomal subunit protein uL5 (180 aa).

The protein belongs to the universal ribosomal protein uL5 family. Part of the 50S ribosomal subunit; part of the 5S rRNA/L5/L18/L25 subcomplex. Contacts the 5S rRNA and the P site tRNA. Forms a bridge to the 30S subunit in the 70S ribosome.

This is one of the proteins that bind and probably mediate the attachment of the 5S RNA into the large ribosomal subunit, where it forms part of the central protuberance. In the 70S ribosome it contacts protein S13 of the 30S subunit (bridge B1b), connecting the 2 subunits; this bridge is implicated in subunit movement. Contacts the P site tRNA; the 5S rRNA and some of its associated proteins might help stabilize positioning of ribosome-bound tRNAs. In Lactobacillus delbrueckii subsp. bulgaricus (strain ATCC 11842 / DSM 20081 / BCRC 10696 / JCM 1002 / NBRC 13953 / NCIMB 11778 / NCTC 12712 / WDCM 00102 / Lb 14), this protein is Large ribosomal subunit protein uL5.